The primary structure comprises 408 residues: Probable cysteine desulfurase (408 aa).

Position 225 is an N6-(pyridoxal phosphate)lysine (Lys225).

The protein belongs to the class-V pyridoxal-phosphate-dependent aminotransferase family. Csd subfamily. It depends on pyridoxal 5'-phosphate as a cofactor.

The catalysed reaction is (sulfur carrier)-H + L-cysteine = (sulfur carrier)-SH + L-alanine. Its function is as follows. Catalyzes the removal of elemental sulfur and selenium atoms from L-cysteine, L-cystine, L-selenocysteine, and L-selenocystine to produce L-alanine. This is Probable cysteine desulfurase (csd) from Mycoplasma pneumoniae (strain ATCC 29342 / M129 / Subtype 1) (Mycoplasmoides pneumoniae).